The following is a 51-amino-acid chain: Protein HokD (51 aa).

Residues 5–25 traverse the membrane as a helical segment; sequence KAMLIALIVICLTVIVTALVT.

It belongs to the Hok/Gef family.

The protein localises to the cell inner membrane. Functionally, toxic component of a type I toxin-antitoxin (TA) system. When overexpressed kills cells within minutes; causes collapse of the transmembrane potential and arrest of respiration. Its toxic effect is probably neutralized by an antisense antitoxin Sok RNA. The polypeptide is Protein HokD (hokD) (Escherichia coli O157:H7).